We begin with the raw amino-acid sequence, 563 residues long: Membrane protein insertase YidC (563 aa).

A helical membrane pass occupies residues 1–21 (MDIKRTILIVALAIVTYVGVL). Positions 43-62 (APGIPDTAAGTNGSASADVP) are disordered. 5 consecutive transmembrane segments (helical) span residues 344 to 364 (LELTVDYGFLWFIAQPIFWLL), 370 to 390 (ILGNWGWSIIVLTMLIKGLFF), 440 to 460 (LGGCLPILVQMPVFLSLYWVL), 471 to 491 (WILWITDLSIKDPFFILPIIM), and 518 to 538 (PIIFTFFFLWFPAGLVLYWVV).

Belongs to the OXA1/ALB3/YidC family. Type 1 subfamily. In terms of assembly, interacts with the Sec translocase complex via SecD. Specifically interacts with transmembrane segments of nascent integral membrane proteins during membrane integration.

It is found in the cell inner membrane. Its function is as follows. Required for the insertion and/or proper folding and/or complex formation of integral membrane proteins into the membrane. Involved in integration of membrane proteins that insert both dependently and independently of the Sec translocase complex, as well as at least some lipoproteins. Aids folding of multispanning membrane proteins. This Pseudomonas savastanoi pv. phaseolicola (strain 1448A / Race 6) (Pseudomonas syringae pv. phaseolicola (strain 1448A / Race 6)) protein is Membrane protein insertase YidC.